An 89-amino-acid polypeptide reads, in one-letter code: Small ribosomal subunit protein bS16 (89 aa).

Belongs to the bacterial ribosomal protein bS16 family.

The polypeptide is Small ribosomal subunit protein bS16 (Chloroflexus aurantiacus (strain ATCC 29364 / DSM 637 / Y-400-fl)).